Reading from the N-terminus, the 253-residue chain is uncharacterized protein (253 aa).

This is an uncharacterized protein from Campylobacter jejuni subsp. jejuni serotype O:2 (strain ATCC 700819 / NCTC 11168).